The following is a 102-amino-acid chain: MADFLKGLPVYNKSNFSRFHADSVCKASNRRPSVYLPTREYPSEQIIVTEKTNILLRYLHQQWDKKNAAKKRDQEQVEAEGESSAPPRKVARTDSPDMPEDT.

Alanine 2 carries the N-acetylalanine modification. Serine 33 and serine 95 each carry phosphoserine. Residues 67–102 (NAAKKRDQEQVEAEGESSAPPRKVARTDSPDMPEDT) are disordered.

Belongs to the DDA1 family. In terms of assembly, component of numerous DCX (DDB1-CUL4-X-box) E3 ubiquitin-protein ligase complexes which consist of a core of DDB1, cullin-4 (CUL4A or CUL4B), DDA1 and RBX1. Component of the DCX(DCAF15) complex, also named CLR4(DCAF15) complex, composed of DCAF15, DDB1, cullin-4 (CUL4A or CUL4B), DDA1 and RBX1. Part of the DDD core complex containing DET1, DDA1 and DDB1; the DDD core complex recruits a specific UBE2E enzyme, such as UBE2E1, UBE2E2 UBE2E3, to form specific DDD-E2 complexes.

The protein operates within protein modification; protein ubiquitination. In terms of biological role, functions as a component of numerous distinct DCX (DDB1-CUL4-X-box) E3 ubiquitin-protein ligase complexes which mediate the ubiquitination and subsequent proteasomal degradation of target proteins. In the DCX complexes, acts as a scaffolding subunit required to stabilize the complex. This chain is DET1- and DDB1-associated protein 1, found in Mus musculus (Mouse).